Reading from the N-terminus, the 495-residue chain is DNA double-strand break repair helicase HerA (495 aa).

Residues R142, 151 to 156, and 459 to 460 each bind ATP; these read GSGKSN and KI.

It belongs to the HerA family. In terms of assembly, interacts with Rad50 and Mre11.

The enzyme catalyses Couples ATP hydrolysis with the unwinding of duplex DNA at the replication fork by translocating in the 5'-3' direction. This creates two antiparallel DNA single strands (ssDNA). The leading ssDNA polymer is the template for DNA polymerase III holoenzyme which synthesizes a continuous strand.. It carries out the reaction ATP + H2O = ADP + phosphate + H(+). The catalysed reaction is Couples ATP hydrolysis with the unwinding of duplex DNA by translocating in the 3'-5' direction.. ATPase activity is slightly stimulated by either circular single- or double-stranded (ds)DNA with a weak preference for dsDNA. Its function is as follows. Involved in DNA double-strand break (DSB) repair. Probably acts with NurA to stimulate resection of the 5' strand and produce the long 3' single-strand that is required for RadA loading. Has DNA-dependent ATPase activity and bidirectional DNA helicase activity. Loads on either a 3' or a 5' DNA tail for subsequent DNA unwinding; has no activity on blunt-end DNA. The protein is DNA double-strand break repair helicase HerA of Sulfolobus acidocaldarius (strain ATCC 33909 / DSM 639 / JCM 8929 / NBRC 15157 / NCIMB 11770).